A 103-amino-acid chain; its full sequence is Large ribosomal subunit protein bL21 (103 aa).

This sequence belongs to the bacterial ribosomal protein bL21 family. Part of the 50S ribosomal subunit. Contacts protein L20.

In terms of biological role, this protein binds to 23S rRNA in the presence of protein L20. The chain is Large ribosomal subunit protein bL21 from Alteromonas mediterranea (strain DSM 17117 / CIP 110805 / LMG 28347 / Deep ecotype).